The following is a 400-amino-acid chain: DNA polymerase IV (400 aa).

The 184-residue stretch at 8-191 (ILLCDANSFF…LPVRELFGIG (184 aa)) folds into the UmuC domain. Residues Asp-12 and Asp-109 each coordinate Mg(2+). Glu-110 is a catalytic residue.

The protein belongs to the DNA polymerase type-Y family. In terms of assembly, monomer. Requires Mg(2+) as cofactor.

It is found in the cytoplasm. The catalysed reaction is DNA(n) + a 2'-deoxyribonucleoside 5'-triphosphate = DNA(n+1) + diphosphate. Poorly processive, error-prone DNA polymerase involved in untargeted mutagenesis. Copies undamaged DNA at stalled replication forks, which arise in vivo from mismatched or misaligned primer ends. These misaligned primers can be extended by PolIV. Exhibits no 3'-5' exonuclease (proofreading) activity. May be involved in translesional synthesis, in conjunction with the beta clamp from PolIII. This is DNA polymerase IV from Moorella thermoacetica (strain ATCC 39073 / JCM 9320).